We begin with the raw amino-acid sequence, 144 residues long: Large ribosomal subunit protein uL15 (144 aa).

A disordered region spans residues 1-57 (MRLNTLSPAAGSKHAPKRVGRGIGSGLGKTGGRGHKGQKSRSGGKVRPGFEGGQMPL). Positions 21 to 31 (RGIGSGLGKTG) are enriched in gly residues. Residues 32–44 (GRGHKGQKSRSGG) show a composition bias toward basic residues.

The protein belongs to the universal ribosomal protein uL15 family. In terms of assembly, part of the 50S ribosomal subunit.

Its function is as follows. Binds to the 23S rRNA. The protein is Large ribosomal subunit protein uL15 of Vibrio vulnificus (strain CMCP6).